We begin with the raw amino-acid sequence, 370 residues long: 1-propanol dehydrogenase PduQ (370 aa).

It belongs to the iron-containing alcohol dehydrogenase family. Interacts with PduP, probably via the N-terminus of PduQ. Fe cation is required as a cofactor.

The protein resides in the bacterial microcompartment. It catalyses the reaction 1-propanol + NAD(+) = propanal + NADH + H(+). It functions in the pathway polyol metabolism; 1,2-propanediol degradation. An iron-dependent alcohol dehydrogenase required for optimal 1,2-propanediol (1,2-PD) degradation. NAD(+) and NADH are regenerated internally within the bacterial microcompartment (BMC) dedicated to 1,2-PD degradation by the PduP and PduQ enzymes, which reduce NAD(+) and oxidize NADH respectively, although there must also be cofactor transport across the BMC. Its function is as follows. Expression of a cosmid containing the full 21-gene pdu operon in E.coli allows E.coli to grow on 1,2-propanediol (1,2-PD) with the appearance of bacterial microcompartments (BMC) in its cytoplasm. In terms of biological role, the 1,2-PD-specific bacterial microcompartment (BMC) concentrates low levels of 1,2-PD catabolic enzymes, concentrates volatile reaction intermediates thus enhancing pathway flux and keeps the level of toxic, mutagenic propionaldehyde low. The chain is 1-propanol dehydrogenase PduQ from Citrobacter freundii.